Reading from the N-terminus, the 664-residue chain is MAGLSSSQIPDGEFTAVVYRLIRDSRYSEAVQLLSAELQRSPRSRAGLSLLAYCYYRLQEFELAAECYEQLSQMHPELEQYRLYQAQALYKACLYPEATRVAFLLDNPSFYSRVLRLQAAIKYSEGDLPGARSLVEQLLSGEAGEDSGGENDPDGLVNMGCLLYKEGHYEAACSKFFAALQASGYQPDVSYNLALACYSNRHYAPALKHIANIIERGIRQHPELGVGMTTEGIDVRSVGNTVVLHQTALVEAFNLKAAIEYQLRNFEAAQEALTDMPPRAEEELDPVTLHNQALMNMDAKPTEGFEKLQFLLQQNPFPPETFGNLLLLYCKYEYFDLAADVLAENAHLTYKFLTPYLYDFLDAMITCQTAPEEAFIKLDGLAGMLTEQLRRLTKQVQEARHNRDDEVVIKAVNEYDETLEKYIPVLMAQAKIYWNLENYQMVEKIFRKSVEFCNDHDVWKLNVAHVLFMQENKYKEAIGFYEPIVKKNYDNILSVSAIVLANLCVSYIMTSQNEEAEELMRKIEKEEEQLSYGDPDKKIYHLCIVNLVIGTLYCAKGNYDFGISRVIKSLEPYHKKLGTDTWYYAKRCFLSLLENMSKHTIMLRDSVIQECVQFLEHCEIFGRSIPAVIEQPLEEERMHTGKNTVTYESRQLKALIYEIIGWNM.

7 TPR repeats span residues 11–44 (DGEFTAVVYRLIRDSRYSEAVQLLSAELQRSPRS), 45–78 (RAGLSLLAYCYYRLQEFELAAECYEQLSQMHPEL), 153–186 (PDGLVNMGCLLYKEGHYEAACSKFFAALQASGYQ), 188–220 (DVSYNLALACYSNRHYAPALKHIANIIERGIRQ), 395–423 (QVQEARHNRDDEVVIKAVNEYDETLEKYI), 424–456 (PVLMAQAKIYWNLENYQMVEKIFRKSVEFCNDH), and 458–491 (VWKLNVAHVLFMQENKYKEAIGFYEPIVKKNYDN). Positions 507 to 534 (YIMTSQNEEAEELMRKIEKEEEQLSYGD) form a coiled coil. A TPR 8 repeat occupies 543-576 (CIVNLVIGTLYCAKGNYDFGISRVIKSLEPYHKK).

It belongs to the TTC30/dfy-1/fleer family. Interacts wit the IFT B complex component IFT52.

It is found in the cell projection. Its subcellular location is the cilium. In terms of biological role, required for polyglutamylation of axonemal tubulin. Plays a role in anterograde intraflagellar transport (IFT), the process by which cilia precursors are transported from the base of the cilium to the site of their incorporation at the tip. In Rattus norvegicus (Rat), this protein is Intraflagellar transport protein 70A2 (Ift70a2).